The primary structure comprises 68 residues: DNA gyrase inhibitor YacG (68 aa).

Zn(2+) is bound by residues cysteine 10, cysteine 13, cysteine 29, and cysteine 33. The tract at residues 45–68 is disordered; sequence EKRIPSDTELSDSDEWSEEDPLKH. Residues 53 to 68 are compositionally biased toward acidic residues; it reads ELSDSDEWSEEDPLKH.

This sequence belongs to the DNA gyrase inhibitor YacG family. In terms of assembly, interacts with GyrB. It depends on Zn(2+) as a cofactor.

In terms of biological role, inhibits all the catalytic activities of DNA gyrase by preventing its interaction with DNA. Acts by binding directly to the C-terminal domain of GyrB, which probably disrupts DNA binding by the gyrase. This is DNA gyrase inhibitor YacG from Yersinia pseudotuberculosis serotype O:1b (strain IP 31758).